The sequence spans 142 residues: MAKKVSAIIKLQVAAGSANPSPPVGPALGQHGVNIMEFCKAFNAQTDSLEKGAPVPVEITVFEDRSFTFITKTPPASFLLKKAAGIKSGSGEPNTKKVGTVTRAQLEEIAKTKEPDLTAADMDAAVRTIAGSARAMGLNVEG.

It belongs to the universal ribosomal protein uL11 family. In terms of assembly, part of the ribosomal stalk of the 50S ribosomal subunit. Interacts with L10 and the large rRNA to form the base of the stalk. L10 forms an elongated spine to which L12 dimers bind in a sequential fashion forming a multimeric L10(L12)X complex. One or more lysine residues are methylated.

Its function is as follows. Forms part of the ribosomal stalk which helps the ribosome interact with GTP-bound translation factors. In Idiomarina loihiensis (strain ATCC BAA-735 / DSM 15497 / L2-TR), this protein is Large ribosomal subunit protein uL11.